The following is a 317-amino-acid chain: Ribosomal large subunit pseudouridine synthase D (317 aa).

Residues 15–89 form the S4 RNA-binding domain; it reads WRLDRALASL…IPLEIVFEDE (75 aa). Residue Asp-141 is part of the active site.

The protein belongs to the pseudouridine synthase RluA family.

The protein localises to the cytoplasm. The catalysed reaction is uridine(1911/1915/1917) in 23S rRNA = pseudouridine(1911/1915/1917) in 23S rRNA. In terms of biological role, responsible for synthesis of pseudouridine from uracil at positions 1911, 1915 and 1917 in 23S ribosomal RNA. The polypeptide is Ribosomal large subunit pseudouridine synthase D (Zymomonas mobilis subsp. mobilis (strain ATCC 31821 / ZM4 / CP4)).